The primary structure comprises 86 residues: Kappa-theraphotoxin-Cg1a 2 (86 aa).

The N-terminal stretch at 1–21 is a signal peptide; sequence MKVSVVITLAVLGVMFVWASA. Positions 22 to 50 are excised as a propeptide; it reads AELEERGSDQRDSPAWLKSMERIFQSEER. 3 disulfide bridges follow: cysteine 52–cysteine 66, cysteine 59–cysteine 71, and cysteine 65–cysteine 78. At phenylalanine 84 the chain carries Phenylalanine amide.

Belongs to the neurotoxin 10 (Hwtx-1) family. 28 (Jztx-11) subfamily. As to expression, expressed by the venom gland.

It localises to the secreted. In terms of biological role, this toxin acts as a voltage-dependent gating-modifier. It inhibits the sodium conductance (IC(50)=124 nM) and slows the fast inactivation (EC(50)=1180 nM) of Nav1.5/SCN5A. It significantly shifts the activation to more depolarized voltages and decreases the deactivation of Nav1.5 currents upon extreme depolarization, but only slightly affects voltage-dependence of steady-state inactivation. In addition, this toxin causes an approximately five-fold decrease in the rate of recovery from inactivation and an approximately 1.9-fold reduction in the closed-state inactivation rate. This toxin integrates the functions of site 3 toxins (alpha-scorpion toxins) with site 4 toxins (beta-scorpion and spider toxins) by targeting multiple sites on Nav1.5. Also shows inhibition of voltage-gated potassium channels (5 uM completely inhibits Kv2.1/KCNB1, whereas 5 uM moderately inhibits Kv4.2/KCND2 Kv4.1/KCND1 channels). This Chilobrachys guangxiensis (Chinese earth tiger tarantula) protein is Kappa-theraphotoxin-Cg1a 2.